Consider the following 239-residue polypeptide: Tetraspanin-9 (239 aa).

The next 3 membrane-spanning stretches (helical) occupy residues 14 to 34 (FLFN…GIWL), 56 to 76 (LVIA…LGAI), and 86 to 106 (FFIV…LFFV). Residues N180 and N181 are each glycosylated (N-linked (GlcNAc...) asparagine). Residues 204-224 (VLGTVGMCLLITQILGMAFSM) form a helical membrane-spanning segment.

Belongs to the tetraspanin (TM4SF) family. Found in a complex with GP6. Post-translationally, glycosylated.

It localises to the membrane. In Ovis aries (Sheep), this protein is Tetraspanin-9 (TSPAN9).